The following is a 487-amino-acid chain: Serine/threonine-protein kinase BSK7 (487 aa).

A lipid anchor (N-myristoyl glycine) is attached at glycine 2. In terms of domain architecture, Protein kinase spans 59-325; that stretch reads ENIVSEHGEK…DLETPSHQLM (267 aa). Residues 65–73 and lysine 87 each bind ATP; that span reads HGEKAPNVV. Aspartate 181 serves as the catalytic Proton acceptor.

Belongs to the protein kinase superfamily. Ser/Thr protein kinase family.

Its subcellular location is the cell membrane. It carries out the reaction L-seryl-[protein] + ATP = O-phospho-L-seryl-[protein] + ADP + H(+). The enzyme catalyses L-threonyl-[protein] + ATP = O-phospho-L-threonyl-[protein] + ADP + H(+). In terms of biological role, probable serine/threonine kinase that acts as a positive regulator of brassinosteroid (BR) signaling downstream of the receptor kinase BRI1. Functions redundantly with BSK3, BSK5, BSK6 and BSK8. This Arabidopsis thaliana (Mouse-ear cress) protein is Serine/threonine-protein kinase BSK7.